Consider the following 313-residue polypeptide: Protein TIFY 4A (313 aa).

Residues 118 to 149 are disordered; sequence SPRSAEFSGGSGHFVSEKDGHKTTISPRSPAE. The 36-residue stretch at 150-185 folds into the Tify domain; that stretch reads TSELVGQMTIFYSGKVNVYDGIPPEKARSIMHFAAN. Disordered regions lie at residues 220-256 and 281-313; these read KANS…KAKK and QNLG…SEGI. The short motif at 232–254 is the Jas element; it reads QANRKVSLQRYREKRKDRKFSKA. Positions 234–241 match the Nuclear localization signal motif; sequence NRKVSLQR. A compositionally biased stretch (basic residues) spans 243–256; it reads REKRKDRKFSKAKK.

Belongs to the TIFY/JAZ family. Interacts with AFPH2/NINJA.

The protein localises to the nucleus. In terms of biological role, regulates the arrest of dispersed meristematic cells during lamina development. This chain is Protein TIFY 4A (TIFY4A), found in Arabidopsis thaliana (Mouse-ear cress).